The following is a 345-amino-acid chain: Tryptophan--tRNA ligase (345 aa).

ATP contacts are provided by residues 22 to 24 (QPS) and 30 to 31 (GN). The 'HIGH' region motif lies at 23-31 (PSGELTIGN). Position 146 (aspartate 146) interacts with L-tryptophan. Residues 158–160 (GID), valine 197, and 206–210 (KMSKS) each bind ATP. Positions 206-210 (KMSKS) match the 'KMSKS' region motif.

Belongs to the class-I aminoacyl-tRNA synthetase family. Homodimer.

It localises to the cytoplasm. It catalyses the reaction tRNA(Trp) + L-tryptophan + ATP = L-tryptophyl-tRNA(Trp) + AMP + diphosphate + H(+). In terms of biological role, catalyzes the attachment of tryptophan to tRNA(Trp). This chain is Tryptophan--tRNA ligase, found in Photorhabdus laumondii subsp. laumondii (strain DSM 15139 / CIP 105565 / TT01) (Photorhabdus luminescens subsp. laumondii).